The sequence spans 654 residues: Biotin-dependent 3-methylcrotonyl-coenzyme A carboxylase alpha1 subunit (654 aa).

The 448-residue stretch at 1–448 folds into the Biotin carboxylation domain; the sequence is MFDTVLVANR…DTAVLDERSA (448 aa). Residues 120–319 form the ATP-grasp domain; it reads KNAVAAFDVP…LVEWQLRVGA (200 aa). 148–209 contacts ATP; that stretch reads AAEVGYPVLI…ERFVLRPRHI (62 aa). Residues Glu275, Glu290, and Asn292 each contribute to the Mg(2+) site. Residues Glu275, Glu290, and Asn292 each coordinate Mn(2+). In terms of domain architecture, Biotinyl-binding spans 578–653; that stretch reads HRAVGARPAE…KVEQVLARIK (76 aa). At Lys620 the chain carries N6-biotinyllysine.

The biotin-dependent acyl-CoA carboxylase complex is composed of AccA1, which contains the biotin carboxylase (BC) and biotin carboxyl carrier protein (BCCP) domains, and AccD1, which contains the carboxyl transferase (CT) domain. The AccA1/AccD1 complex forms a dodecamer. Mg(2+) serves as cofactor. Requires Mn(2+) as cofactor. Biotin is required as a cofactor.

The enzyme catalyses N(6)-biotinyl-L-lysyl-[protein] + hydrogencarbonate + ATP = N(6)-carboxybiotinyl-L-lysyl-[protein] + ADP + phosphate + H(+). The protein operates within amino-acid degradation; L-leucine degradation. Functionally, component of a biotin-dependent acyl-CoA carboxylase complex. This subunit catalyzes the ATP-dependent carboxylation of the biotin carried by the biotin carboxyl carrier (BCC) domain, resulting in the formation of carboxyl biotin. When associated with the beta1 subunit AccD1, is involved in branched amino-acid catabolism with methylcrotonyl coenzyme A as the substrate. This chain is Biotin-dependent 3-methylcrotonyl-coenzyme A carboxylase alpha1 subunit (accA1), found in Mycobacterium bovis (strain ATCC BAA-935 / AF2122/97).